The primary structure comprises 465 residues: tRNA modification GTPase MnmE (465 aa).

3 residues coordinate (6S)-5-formyl-5,6,7,8-tetrahydrofolate: arginine 21, glutamate 85, and lysine 124. Residues 220–387 form the TrmE-type G domain; it reads GVPVAIIGET…LQKMLINAAH (168 aa). Asparagine 230 is a binding site for K(+). Residues 230–235, 249–255, 274–277, and 337–340 contribute to the GTP site; these read NAGKST, SDIHGTT, DTAG, and NKAD. Serine 234 is a binding site for Mg(2+). Positions 249, 251, and 254 each coordinate K(+). Mg(2+) is bound at residue threonine 255. Lysine 465 contributes to the (6S)-5-formyl-5,6,7,8-tetrahydrofolate binding site.

This sequence belongs to the TRAFAC class TrmE-Era-EngA-EngB-Septin-like GTPase superfamily. TrmE GTPase family. In terms of assembly, homodimer. Heterotetramer of two MnmE and two MnmG subunits. It depends on K(+) as a cofactor.

The protein localises to the cytoplasm. Its function is as follows. Exhibits a very high intrinsic GTPase hydrolysis rate. Involved in the addition of a carboxymethylaminomethyl (cmnm) group at the wobble position (U34) of certain tRNAs, forming tRNA-cmnm(5)s(2)U34. The polypeptide is tRNA modification GTPase MnmE (Bacteroides thetaiotaomicron (strain ATCC 29148 / DSM 2079 / JCM 5827 / CCUG 10774 / NCTC 10582 / VPI-5482 / E50)).